We begin with the raw amino-acid sequence, 209 residues long: Guanylate kinase (209 aa).

The Guanylate kinase-like domain maps to 5–184 (GLLIVFSGPS…AAERVKRVIE (180 aa)). ATP is bound at residue 12-19 (GPSGVGKG).

The protein belongs to the guanylate kinase family.

Its subcellular location is the cytoplasm. It carries out the reaction GMP + ATP = GDP + ADP. Essential for recycling GMP and indirectly, cGMP. In Streptococcus agalactiae serotype Ia (strain ATCC 27591 / A909 / CDC SS700), this protein is Guanylate kinase.